A 94-amino-acid polypeptide reads, in one-letter code: FXYD domain-containing ion transport regulator 6 (94 aa).

An N-terminal signal peptide occupies residues 1 to 17 (METVLILCSLLAPVVLA). Residues 18–34 (SAAEKEKEKDPFYYDYQ) are Extracellular-facing. The chain crosses the membrane as a helical span at residues 35-57 (TLRIGGLVFAVVLFSVGILLILS). At 58–94 (RRCKCSFNQKPRAPGDEEAQVENLITTNAAEPQKAEN) the chain is on the cytoplasmic side.

It belongs to the FXYD family. Regulatory subunit of the sodium/potassium-transporting ATPase which is composed of a catalytic alpha subunit, a non-catalytic beta subunit and an additional regulatory subunit. The regulatory subunit, a member of the FXYD protein family, modulates the enzymatic activity in a tissue- and isoform-specific way by changing affinities of the Na+/K+-ATPase toward Na(+), K(+) or ATP. As to expression, expressed in the neuronal fibers of the medial part of lateral habenula nucleus, thalamus, hypothalamus, stria terminalis, zona incerta, amygdaloid body and cingulum, olfactory bulb, hippocampus, cerebral cortex and cerebellum. In the cerebellum there is a predominant expression pattern in the granule layer of lobules VI-IX of the posterior lobe. Detected in inner ear.

The protein resides in the cell membrane. Functionally, associates with and regulates the activity of the sodium/potassium-transporting ATPase (NKA) which catalyzes the hydrolysis of ATP coupled with the exchange of Na(+) and K(+) ions across the plasma membrane. Decreases the apparent affinity of the transporter for Na(+). In addition to modulating NKA kinetics, may also function as a regulator of NKA localization to the plasma membrane. This is FXYD domain-containing ion transport regulator 6 (Fxyd6) from Rattus norvegicus (Rat).